The following is a 172-amino-acid chain: Large ribosomal subunit protein uL10 (172 aa).

Belongs to the universal ribosomal protein uL10 family. As to quaternary structure, part of the ribosomal stalk of the 50S ribosomal subunit. The N-terminus interacts with L11 and the large rRNA to form the base of the stalk. The C-terminus forms an elongated spine to which L12 dimers bind in a sequential fashion forming a multimeric L10(L12)X complex.

Forms part of the ribosomal stalk, playing a central role in the interaction of the ribosome with GTP-bound translation factors. The sequence is that of Large ribosomal subunit protein uL10 from Chelativorans sp. (strain BNC1).